The following is a 328-amino-acid chain: Transcription factor bHLH25 (328 aa).

Residues 125–152 are disordered; it reads PHQKSDEFNRKGTKRAQPFSRNQSNAQD. The bHLH domain occupies 148 to 197; sequence SNAQDHIIAERKRREKLTQRFVALSALVPGLKKMDKASVLGDALKHIKYL.

Homodimer. In terms of tissue distribution, expressed in flowers.

The protein resides in the nucleus. In Arabidopsis thaliana (Mouse-ear cress), this protein is Transcription factor bHLH25 (BHLH25).